An 821-amino-acid polypeptide reads, in one-letter code: Probable phosphoenolpyruvate synthase (821 aa).

Histidine 444 serves as the catalytic Tele-phosphohistidine intermediate. 7 residues coordinate substrate: arginine 543, arginine 590, glutamate 687, glycine 709, threonine 710, asparagine 711, and aspartate 712. Residue glutamate 687 coordinates Mg(2+). Aspartate 712 contacts Mg(2+). The active-site Proton donor is the cysteine 759.

Belongs to the PEP-utilizing enzyme family. The cofactor is Mg(2+).

The catalysed reaction is pyruvate + ATP + H2O = phosphoenolpyruvate + AMP + phosphate + 2 H(+). It participates in carbohydrate biosynthesis; gluconeogenesis. Its function is as follows. Catalyzes the phosphorylation of pyruvate to phosphoenolpyruvate. This Pyrococcus horikoshii (strain ATCC 700860 / DSM 12428 / JCM 9974 / NBRC 100139 / OT-3) protein is Probable phosphoenolpyruvate synthase (ppsA).